A 150-amino-acid chain; its full sequence is CCAAT/enhancer-binding protein gamma (150 aa).

Lysine 3 participates in a covalent cross-link: Glycyl lysine isopeptide (Lys-Gly) (interchain with G-Cter in SUMO2). The tract at residues 27–94 (GLQQVPQLVP…QKAQDTLQRV (68 aa)) is disordered. Positions 28-37 (LQQVPQLVPA) are enriched in low complexity. Over residues 56–72 (SPMDRNSDEYRQRRERN) the composition is skewed to basic and acidic residues. The region spanning 62 to 125 (SDEYRQRRER…SVLKDLFLEH (64 aa)) is the bZIP domain. Residues 66–93 (RQRRERNNMAVKKSRLKSKQKAQDTLQR) form a basic motif region. A leucine-zipper region spans residues 97–118 (LKEENERLEAKIKLLTKELSVL).

This sequence belongs to the bZIP family. C/EBP subfamily. In terms of assembly, binds DNA as a dimer and can form stable heterodimers with CEBPA and CEBPB. Interacts with ZNF638; this interaction increases transcriptional activation.

It localises to the nucleus. Functionally, transcription factor that binds to the promoter and the enhancer regions of target genes. Binds to the promoter and the enhancer of the alpha-1-fetoprotein gene. Binds to the enhancer element PRE-I (positive regulatory element-I) of the IL-4 gene. Binds to the promoter and the enhancer of the immunoglobulin heavy chain. Binds to GPE1, a cis-acting element in the G-CSF gene promoter. This chain is CCAAT/enhancer-binding protein gamma (Cebpg), found in Rattus norvegicus (Rat).